The sequence spans 1742 residues: NACHT and WD repeat domain-containing protein 2 (1742 aa).

5 LRR repeats span residues 386–410 (FYEY…GHIN), 677–698 (LEDV…TRPS), 724–747 (VKNV…LYLQ), 883–906 (YSQE…VTAF), and 925–953 (LPKL…SSMD). One can recognise an NACHT domain in the interval 410-737 (NPLIIYGGPC…TLLVWANRHL (328 aa)). WD repeat units follow at residues 963 to 1004 (LSSS…LLRQ), 1007 to 1046 (TAQS…LLSE), 1140 to 1179 (FSGG…SPQL), 1229 to 1271 (KHNE…ASLQ), 1272 to 1311 (EISG…AMSN), 1314 to 1353 (KTGK…IEAV), 1355 to 1394 (KHEG…NLFR), 1396 to 1434 (NGQR…RVCN), 1476 to 1516 (EDGT…ICRR), 1522 to 1564 (NFLK…VHAS), and 1614 to 1653 (SLYK…DAAL).

The protein is NACHT and WD repeat domain-containing protein 2 (NWD2) of Homo sapiens (Human).